Consider the following 142-residue polypeptide: Protein OrfX1 (142 aa).

This sequence belongs to the TULIP P47 family. As to quaternary structure, orfX1 was not detected as part of a crude toxin extract that includes BoNTA2/NTNH, P47, OrfX2 and OrfX3.

In terms of biological role, part of a botulinum neurotoxin type A2 (BoNT) locus; may be part of a progenitor toxin complex required to protect BoNT during its passage through the host gastrointestinal tract. Binds phosphatidylinositol (3,4) bisphosphate, phosphatidylethanolamine and phosphatidylserine. This is Protein OrfX1 (orfX1) from Clostridium botulinum (strain Kyoto / Type A2).